Reading from the N-terminus, the 318-residue chain is Protein FAM228A (318 aa).

Residues 259 to 297 (SQESKRHEKKGLALGTGQHRPRSWAAGEGQQRRRSQPVD) are disordered.

The protein belongs to the FAM228 family.

In Bos taurus (Bovine), this protein is Protein FAM228A (FAM228A).